Here is a 597-residue protein sequence, read N- to C-terminus: MAARKGTDSETEDGGWVLIEADCSEVDSADETSENASNVSDLVDNASIAETQGLSLQLFQQQELTECEEQLQQLKRKFVQSPQSRDLCSLSPQLASISLTPRTSKKVKKQLFATDSGIQSSNEADDSLEGQRQVEPLPGREENGADALFKVRDKRAFLYSKFKSSFGISFTDLTRVYNSDKTCSSDWVVCLYHVSDDRREAGKTLLQDHCEYFFLHSMGFCTLLLLCLFVPKCRNTLFKLCRSLFHISNVQMLADPPKTRSPAVALYWYKKGFASGTFTHGELPSWIAQQTLITHHLAAEKTFDLSEMVQWAYDNDLKDESEIAYKYAALAETDENALAFLKSNNQPKHVKDCATMCRYYKKAEMKRLSMSQWIDERCKATDDGPGDWKEVVKFLRHQGIEFILFLADFKRFLRGRPKKNCLVFWGPPNTGKSMFCMSLLSFLHGVVISYVNSKSHFWLQPLTEGKMGLLDDATRPCWLYIDTYLRNALDGNTFSVDCKHKAPLQLKCPPLLITTNVNVCGDEKFKYLRSRCSFFHFPQEFPLDDNGNPGFQLNDQSWASFFKRFWKHLDLSDPEDGEDGETQRGLRLTARGTTESV.

Residues 75-77 (KRK) carry the Nuclear localization signal motif. 3 positions are modified to phosphoserine; by host: serine 81, serine 91, and serine 104. The Nuclear export signal signature appears at 90–99 (LSPQLASISL). The tract at residues 119–141 (QSSNEADDSLEGQRQVEPLPGRE) is disordered. The tract at residues 137-300 (LPGREENGAD…TLITHHLAAE (164 aa)) is DNA-binding region. One can recognise an SF3 helicase domain in the interval 400 to 550 (IEFILFLADF…FPLDDNGNPG (151 aa)). 426 to 433 (GPPNTGKS) is an ATP binding site. Residue lysine 507 forms a Glycyl lysine isopeptide (Lys-Gly) (interchain with G-Cter in SUMO) linkage. The disordered stretch occupies residues 574-597 (PEDGEDGETQRGLRLTARGTTESV).

Belongs to the papillomaviridae E1 protein family. In terms of assembly, can form hexamers. Interacts with E2 protein; this interaction increases E1 DNA binding specificity. Interacts with host DNA polymerase subunit POLA2. Interacts with host single stranded DNA-binding protein RPA1. Interacts with host TOP1; this interaction stimulates the enzymatic activity of TOP1. Post-translationally, phosphorylated. Sumoylated.

The protein localises to the host nucleus. It catalyses the reaction Couples ATP hydrolysis with the unwinding of duplex DNA by translocating in the 3'-5' direction.. The enzyme catalyses ATP + H2O = ADP + phosphate + H(+). Its function is as follows. ATP-dependent DNA 3'-5' helicase required for initiation of viral DNA replication. It forms a complex with the viral E2 protein. The E1-E2 complex binds to the replication origin which contains binding sites for both proteins. During the initial step, a dimer of E1 interacts with a dimer of protein E2 leading to a complex that binds the viral origin of replication with high specificity. Then, a second dimer of E1 displaces the E2 dimer in an ATP-dependent manner to form the E1 tetramer. Following this, two E1 monomers are added to each half of the site, which results in the formation of two E1 trimers on the viral ori. Subsequently, two hexamers will be created. The double hexamer acts as a bi-directional helicase machinery and unwinds the viral DNA and then recruits the host DNA polymerase to start replication. This is Replication protein E1 from Canis lupus familiaris (Dog).